The primary structure comprises 372 residues: 4-hydroxy-3-methylbut-2-en-1-yl diphosphate synthase (flavodoxin) (372 aa).

Residues Cys-270, Cys-273, Cys-305, and Glu-312 each contribute to the [4Fe-4S] cluster site.

This sequence belongs to the IspG family. [4Fe-4S] cluster is required as a cofactor.

It carries out the reaction (2E)-4-hydroxy-3-methylbut-2-enyl diphosphate + oxidized [flavodoxin] + H2O + 2 H(+) = 2-C-methyl-D-erythritol 2,4-cyclic diphosphate + reduced [flavodoxin]. It participates in isoprenoid biosynthesis; isopentenyl diphosphate biosynthesis via DXP pathway; isopentenyl diphosphate from 1-deoxy-D-xylulose 5-phosphate: step 5/6. Converts 2C-methyl-D-erythritol 2,4-cyclodiphosphate (ME-2,4cPP) into 1-hydroxy-2-methyl-2-(E)-butenyl 4-diphosphate. In Alteromonas mediterranea (strain DSM 17117 / CIP 110805 / LMG 28347 / Deep ecotype), this protein is 4-hydroxy-3-methylbut-2-en-1-yl diphosphate synthase (flavodoxin).